Here is an 842-residue protein sequence, read N- to C-terminus: Ionotropic receptor 21a (842 aa).

A signal peptide spans M1–A15. N-linked (GlcNAc...) asparagine glycosylation is present at N325. Transmembrane regions (helical) follow at residues W405–T425 and W437–F457. N469 carries an N-linked (GlcNAc...) asparagine glycan. The chain crosses the membrane as a helical span at residues W479–L499. N533, N558, N583, and N588 each carry an N-linked (GlcNAc...) asparagine glycan. The chain crosses the membrane as a helical span at residues M680–V700. The disordered stretch occupies residues W722–A745. N765 and N797 each carry an N-linked (GlcNAc...) asparagine glycan.

Belongs to the glutamate-gated ion channel (TC 1.A.10.1) family. Expressed in the dorsal organ cool cells. In the antenna, expressed in approximately six neurons in the arista as well as five to ten neurons near the third chamber of the sacculus.

The protein localises to the cell membrane. Integral part of a neural sensory system in the antenna that provides the neural basis for the response to environmental changes in temperature (thermosensation). Together with Ir25a and Ir93a, mediates the response of the dorsal organ cool cells, a trio of cool-responsive neurons, to cooling and is required for cool avoidance behavior. In Drosophila melanogaster (Fruit fly), this protein is Ionotropic receptor 21a.